Here is a 220-residue protein sequence, read N- to C-terminus: Large ribosomal subunit protein uL6c (220 aa).

The transit peptide at 1–38 (MSLPLPSHMKSVFLGMKVEISTSVPVTRIGFWRKSVDC) directs the protein to the chloroplast.

Component of the chloroplast large ribosomal subunit (LSU). Mature 70S chloroplast ribosomes of higher plants consist of a small (30S) and a large (50S) subunit. The 30S small subunit contains 1 molecule of ribosomal RNA (16S rRNA) and 24 different proteins. The 50S large subunit contains 3 rRNA molecules (23S, 5S and 4.5S rRNA) and 33 different proteins.

The protein localises to the plastid. It is found in the chloroplast. Functionally, component of the chloroplast ribosome (chloro-ribosome), a dedicated translation machinery responsible for the synthesis of chloroplast genome-encoded proteins, including proteins of the transcription and translation machinery and components of the photosynthetic apparatus. The chain is Large ribosomal subunit protein uL6c (RPL6) from Spinacia oleracea (Spinach).